The following is a 370-amino-acid chain: 4-hydroxy-3-methylbut-2-en-1-yl diphosphate synthase (flavodoxin) (370 aa).

[4Fe-4S] cluster contacts are provided by cysteine 268, cysteine 271, cysteine 303, and glutamate 310.

This sequence belongs to the IspG family. Requires [4Fe-4S] cluster as cofactor.

The enzyme catalyses (2E)-4-hydroxy-3-methylbut-2-enyl diphosphate + oxidized [flavodoxin] + H2O + 2 H(+) = 2-C-methyl-D-erythritol 2,4-cyclic diphosphate + reduced [flavodoxin]. The protein operates within isoprenoid biosynthesis; isopentenyl diphosphate biosynthesis via DXP pathway; isopentenyl diphosphate from 1-deoxy-D-xylulose 5-phosphate: step 5/6. Converts 2C-methyl-D-erythritol 2,4-cyclodiphosphate (ME-2,4cPP) into 1-hydroxy-2-methyl-2-(E)-butenyl 4-diphosphate. The sequence is that of 4-hydroxy-3-methylbut-2-en-1-yl diphosphate synthase (flavodoxin) from Bacillus cereus (strain B4264).